We begin with the raw amino-acid sequence, 236 residues long: Purine nucleoside phosphorylase DeoD-type 2 (236 aa).

His-5 is a binding site for a purine D-ribonucleoside. Phosphate is bound by residues Gly-21, Arg-25, Arg-44, and 88–91; that span reads RVGS. A purine D-ribonucleoside-binding positions include 180–182 and 204–205; these read DME and SD. The Proton donor role is filled by Asp-205.

This sequence belongs to the PNP/UDP phosphorylase family. Homohexamer; trimer of homodimers.

It catalyses the reaction a purine D-ribonucleoside + phosphate = a purine nucleobase + alpha-D-ribose 1-phosphate. The catalysed reaction is a purine 2'-deoxy-D-ribonucleoside + phosphate = a purine nucleobase + 2-deoxy-alpha-D-ribose 1-phosphate. Functionally, catalyzes the reversible phosphorolytic breakdown of the N-glycosidic bond in the beta-(deoxy)ribonucleoside molecules, with the formation of the corresponding free purine bases and pentose-1-phosphate. This chain is Purine nucleoside phosphorylase DeoD-type 2, found in Vibrio parahaemolyticus serotype O3:K6 (strain RIMD 2210633).